We begin with the raw amino-acid sequence, 456 residues long: Phosphomannomutase (456 aa).

Residue Ser-98 is the Phosphoserine intermediate of the active site. Mg(2+)-binding residues include Ser-98, Asp-246, Asp-248, and Asp-250.

Belongs to the phosphohexose mutase family. Mg(2+) is required as a cofactor.

The catalysed reaction is alpha-D-mannose 1-phosphate = D-mannose 6-phosphate. It participates in nucleotide-sugar biosynthesis; GDP-alpha-D-mannose biosynthesis; alpha-D-mannose 1-phosphate from D-fructose 6-phosphate: step 2/2. It functions in the pathway bacterial outer membrane biogenesis; LPS O-antigen biosynthesis. In terms of biological role, involved in GDP-mannose biosynthesis which serves as the activated sugar nucleotide precursor for mannose residues in cell surface polysaccharides. This enzyme participates in synthesis of the LPS O9 antigen. The sequence is that of Phosphomannomutase (manB) from Escherichia coli.